The chain runs to 341 residues: MLRGGPCGAHWRPALALALLGLATILGASPTSGQRWPVPYKRFSFRPKTDPYCQAKYTFCPTGSPIPVMKDNDVIEVLRLQAPIWEFKYGDLLGHFKLMHDAVGFRSTLTGKNYTIEWYELFQLGNCTFPHLRPDKSAPFWCNQGAACFFEGIDDKHWKENGTLSVVATISGNTFNKVAEWVKQDNETGIYYETWTVRAGPGQGAQTWFESYDCSNFVLRTYKKLAEFGTEFKKIETNYTKIFLYSGEPIYLGNETSIFGPKGNKTLALAIKKFYGPFRPYLSTKDFLMNFLKIFDTVIIHRQFYLFYNFEYWFLPMKPPFVKITYEETPLPTRHTTFTDL.

The Cytoplasmic portion of the chain corresponds to 1-13 (MLRGGPCGAHWRP). The chain crosses the membrane as a helical; Signal-anchor for type II membrane protein span at residues 14-30 (ALALALLGLATILGASP). Over 31-341 (TSGQRWPVPY…PTRHTTFTDL (311 aa)) the chain is Lumenal. Intrachain disulfides connect C53/C142 and C60/C148. H100 serves as the catalytic Proton acceptor. N113, N126, N161, and N186 each carry an N-linked (GlcNAc...) asparagine glycan. The active-site Nucleophile; Acyl-thioester intermediate is C214. Residues N238, N254, and N264 are each glycosylated (N-linked (GlcNAc...) asparagine). The membrane-anchoring stretch occupies residues 287-326 (FLMNFLKIFDTVIIHRQFYLFYNFEYWFLPMKPPFVKITY).

The protein belongs to the CLN5 family. Multimer. Interacts with PPT1, TPP1, CLN3, CLN6, CLN8, ATP5F1A and ATP5F1B. Interacts with SORT1, RAB5A and RAB7A. N-glycosylated with both high mannose and complex type sugars. Glycosylation is important for proper folding and trafficking to the lysosomes. Post-translationally, the type II membrane signal anchor is proteolytically cleaved to produce a mature form that is transported to the lysosomes (Bis(monoacylglycero)phosphate synthase CLN5, secreted form). In terms of processing, can undergo proteolytic cleavage at the C-terminus, probably by a cysteine protease and may involve the removal of approximately 10-15 residues from the C-terminal end. As to expression, heart, kidney, liver, spleen, muscle and rectum (at protein level).

It localises to the lysosome. The protein resides in the membrane. It catalyses the reaction S-hexadecanoyl-L-cysteinyl-[protein] + H2O = L-cysteinyl-[protein] + hexadecanoate + H(+). It carries out the reaction 2 1-acyl-sn-glycero-3-phospho-(1'-sn-glycerol) = 1-acyl-sn-glycero-3-phospho-(3'-acyl-sn-1'-glycerol) + sn-glycero-3-phospho-(1'-sn-glycerol). The catalysed reaction is 2 1-(9Z-octadecenoyl)-sn-glycero-3-phospho-(1'-sn-glycerol) = 1-(9Z-octadecenoyl)-sn-glycero-3-phospho-(3'-(9Z-octadecenoyl)-1'-sn-glycerol) + sn-glycero-3-phospho-(1'-sn-glycerol). The enzyme catalyses 2 1-octadecanoyl-sn-glycero-3-phospho-(1'-sn-glycerol) = 1-octadecanoyl-sn-glycero-3-phospho-(3'-octadecanoyl-1'-sn-glycerol) + sn-glycero-3-phospho-(1'-sn-glycerol). It catalyses the reaction 2 1-hexadecanoyl-sn-glycero-3-phospho-(1'-sn-glycerol) = 1-hexadecanoyl-sn-glycero-3-phospho-(3'-hexadecanoyl-1'-sn-glycerol) + sn-glycero-3-phospho-(1'-sn-glycerol). It carries out the reaction 2 1-tetradecanoyl-sn-glycero-3-phospho-(1'-sn-glycerol) = 1-tetradecanoyl-sn-glycero-3-phospho-(3'-tetradecanoyl-1'-sn-glycerol) + sn-glycero-3-phospho-(1'-sn-glycerol). In terms of biological role, catalyzes the synthesis of bis(monoacylglycero)phosphate (BMP) via transacylation of 2 molecules of lysophosphatidylglycerol (LPG). BMP also known as lysobisphosphatidic acid plays a key role in the formation of intraluminal vesicles and in maintaining intracellular cholesterol homeostasis. Can use only LPG as the exclusive lysophospholipid acyl donor for base exchange and displays BMP synthase activity towards various LPGs (LPG 14:0, LPG 16:0, LPG 18:0, LPG 18:1) with a higher preference for longer chain lengths. Plays a role in influencing the retrograde trafficking of lysosomal sorting receptors SORT1 and IGF2R from the endosomes to the trans-Golgi network by controlling the recruitment of retromer complex to the endosomal membrane. Regulates the localization and activation of RAB7A which is required to recruit the retromer complex to the endosomal membrane. Exhibits palmitoyl protein thioesterase (S-depalmitoylation) activity in vitro and most likely plays a role in protein S-depalmitoylation. The protein is Bis(monoacylglycero)phosphate synthase CLN5 (Cln5) of Mus musculus (Mouse).